The chain runs to 738 residues: 1,4-alpha-glucan branching enzyme GlgB (738 aa).

Asp-417 acts as the Nucleophile in catalysis. Glu-472 acts as the Proton donor in catalysis.

The protein belongs to the glycosyl hydrolase 13 family. GlgB subfamily. As to quaternary structure, monomer.

The catalysed reaction is Transfers a segment of a (1-&gt;4)-alpha-D-glucan chain to a primary hydroxy group in a similar glucan chain.. It participates in glycan biosynthesis; glycogen biosynthesis. In terms of biological role, catalyzes the formation of the alpha-1,6-glucosidic linkages in glycogen by scission of a 1,4-alpha-linked oligosaccharide from growing alpha-1,4-glucan chains and the subsequent attachment of the oligosaccharide to the alpha-1,6 position. The sequence is that of 1,4-alpha-glucan branching enzyme GlgB from Burkholderia pseudomallei (strain 668).